We begin with the raw amino-acid sequence, 260 residues long: MVKKTYAIRYVAGQPVERVFPMSTHQLGNTLPVGTPLITGTNELRVVVWNIYKQQRPSWRKVLKELTNESQLILLQEAQTTPDLVEFATSNYLISDQVPAFLLPQHPSGVMTLATSHPVYCCPLREKEPLLRLSKSALITVYLLQDNRQLMVINVHAINFSFGVDVYSRQLNNIGVHVRLHNGPVIMAGDFNAWSKQRLNALKRFTRYLHLEEVSFTDDYRTIAFGRPLDFIFYRELNIANAIVIPTDASDHNPLVVNFY.

It belongs to the UPF0294 family.

The protein localises to the cytoplasm. This Photorhabdus laumondii subsp. laumondii (strain DSM 15139 / CIP 105565 / TT01) (Photorhabdus luminescens subsp. laumondii) protein is UPF0294 protein plu0699.